Here is a 424-residue protein sequence, read N- to C-terminus: Serpin-Z2A (424 aa).

The tract at residues 370–394 (GTEAAASTACTIRLLSMSYPEDFVA) is RCL.

Belongs to the serpin family.

Its function is as follows. Probable serine protease inhibitor. In Oryza sativa subsp. japonica (Rice), this protein is Serpin-Z2A.